A 394-amino-acid chain; its full sequence is Actin-related protein 2 (394 aa).

Residue Met-1 is modified to N-acetylmethionine. Residues 160–162 (GDG) and 214–218 (RMIKE) each bind ATP. An N6-acetyllysine modification is found at Lys-299. 305-310 (GGSTMY) contributes to the ATP binding site. Lys-322 is subject to N6-acetyllysine.

It belongs to the actin family. ARP2 subfamily. As to quaternary structure, component of the Arp2/3 complex composed of ACTR2/ARP2, ACTR3/ARP3, ARPC1B/p41-ARC, ARPC2/p34-ARC, ARPC3/p21-ARC, ARPC4/p20-ARC and ARPC5/p16-ARC. Interacts with AVIL.

The protein resides in the cytoplasm. Its subcellular location is the cytoskeleton. It localises to the cell projection. It is found in the nucleus. In terms of biological role, ATP-binding component of the Arp2/3 complex, a multiprotein complex that mediates actin polymerization upon stimulation by nucleation-promoting factor (NPF). The Arp2/3 complex mediates the formation of branched actin networks in the cytoplasm, providing the force for cell motility. Seems to contact the pointed end of the daughter actin filament. In podocytes, required for the formation of lamellipodia downstream of AVIL and PLCE1 regulation. In addition to its role in the cytoplasmic cytoskeleton, the Arp2/3 complex also promotes actin polymerization in the nucleus, thereby regulating gene transcription and repair of damaged DNA. The Arp2/3 complex promotes homologous recombination (HR) repair in response to DNA damage by promoting nuclear actin polymerization, leading to drive motility of double-strand breaks (DSBs). This Bos taurus (Bovine) protein is Actin-related protein 2 (ACTR2).